The primary structure comprises 610 residues: Myosin light chain kinase 2, skeletal/cardiac muscle (610 aa).

Disordered stretches follow at residues 1 to 168 (MATE…HSPS) and 196 to 240 (VSET…DTSQ). Ala-2 bears the N-acetylalanine mark. Composition is skewed to basic and acidic residues over residues 32–63 (SEKE…KKNP) and 70–82 (KTPE…KKGD). Residues 94–109 (SGEGDGGGGPAEGGTG) are compositionally biased toward gly residues. Residues 141–157 (GEAKAGKKAAECREAGR) are compositionally biased toward basic and acidic residues. Phosphoserine occurs at positions 160, 166, and 168. The 256-residue stretch at 299-554 (MNSKEALGGG…AEQCLAHPWL (256 aa)) folds into the Protein kinase domain. ATP-binding positions include 305-313 (LGGGKFGAV) and Lys-328. Asp-420 acts as the Proton acceptor in catalysis. The residue at position 459 (Thr-459) is a Phosphothreonine. The tract at residues 588-600 (IAVSAANRFKKIS) is calmodulin-binding.

It belongs to the protein kinase superfamily. CAMK Ser/Thr protein kinase family. May interact with centrin.

It localises to the cytoplasm. The enzyme catalyses L-seryl-[myosin light chain] + ATP = O-phospho-L-seryl-[myosin light chain] + ADP + H(+). It catalyses the reaction L-threonyl-[myosin light chain] + ATP = O-phospho-L-threonyl-[myosin light chain] + ADP + H(+). Implicated in the level of global muscle contraction and cardiac function. Phosphorylates a specific serine in the N-terminus of a myosin light chain. The protein is Myosin light chain kinase 2, skeletal/cardiac muscle (Mylk2) of Rattus norvegicus (Rat).